The sequence spans 238 residues: Thymidine kinase, cytosolic (238 aa).

Position 2 is an N-acetylserine (serine 2). Phosphoserine is present on residues serine 2 and serine 13. ATP is bound by residues 26-33, 58-60, and 97-100; these read GPMFSGKS, DTR, and DEGQ. Glutamate 98 serves as the catalytic Proton acceptor. Phenylalanine 128 serves as a coordination point for substrate. Cysteine 153 and cysteine 156 together coordinate Zn(2+). Substrate-binding positions include 172–176 and tyrosine 181; that span reads VEVIG. Zn(2+)-binding residues include cysteine 185 and cysteine 188. The KEN box signature appears at 206-208; sequence KEN. Residue serine 235 is modified to Phosphoserine.

It belongs to the thymidine kinase family. As to quaternary structure, homotetramer. Tetramerization from dimerization is induced by ATP and increases catalytic efficiency due to a high affinity for thymidine. Tetramerization is inhibited by phosphorylation at Ser-13. Interacts (via the KEN box) with FZR1. Phosphorylated on Ser-13 in mitosis. Phosphorylation of Ser-13 by CDK1 during mitosis reduces homotetramerization and catalytic efficiency when DNA replication is complete and intracellular TK1 is still present at a high level. Post-translationally, polyubiquitinated. Postmitosis, ubiquitination leads to proteasomal degradation. The KEN box sequence located at the C-terminal region targets for degradation by the anaphase promoting complex (APC/C) activated and rate-limited by FZR1.

Its subcellular location is the cytoplasm. The enzyme catalyses thymidine + ATP = dTMP + ADP + H(+). Functionally, cell-cycle-regulated enzyme of importance in nucleotide metabolism. Catalyzes the first enzymatic step in the salvage pathway converting thymidine into thymidine monophosphate. Transcriptional regulation limits expression to the S phase of the cell cycle and transient expression coincides with the oscillation in the intracellular dTTP concentration. The protein is Thymidine kinase, cytosolic (TK1) of Bos taurus (Bovine).